The chain runs to 116 residues: Large ribosomal subunit protein bL19 (116 aa).

It belongs to the bacterial ribosomal protein bL19 family.

This protein is located at the 30S-50S ribosomal subunit interface and may play a role in the structure and function of the aminoacyl-tRNA binding site. This is Large ribosomal subunit protein bL19 from Clostridium beijerinckii (strain ATCC 51743 / NCIMB 8052) (Clostridium acetobutylicum).